The sequence spans 2157 residues: Genome polyprotein (2157 aa).

Gly-2 carries N-myristoyl glycine; by host lipidation. The Cytoplasmic segment spans residues 2–1470 (GAQVSRQNVG…DLSIANSIIT (1469 aa)). The tract at residues 567 to 584 (PIEQNPVENYIDEVLNEV) is amphipathic alpha-helix. Catalysis depends on for protease 2A activity residues His-875 and Asp-892. Zn(2+)-binding residues include Cys-909 and Cys-911. The active-site For protease 2A activity is the Cys-963. Positions 969 and 971 each coordinate Zn(2+). A membrane-binding region spans residues 1095–1164 (SDSWLKKFTE…NLRAADNATQ (70 aa)). The segment at 1095–1228 (SDSWLKKFTE…PPGTGKSITT (134 aa)) is oligomerization. The interval 1116–1120 (GNKIS) is RNA-binding. The 163-residue stretch at 1188-1350 (EAKRIKVLYN…YKDAQGKLNV (163 aa)) folds into the SF3 helicase domain. Residues Cys-1357, Cys-1368, and Cys-1373 each coordinate Zn(2+). Residues 1357 to 1373 (CNVNTKIGNAKCCPFVC) form a C4-type; degenerate zinc finger. Residues 1400-1407 (EDKRRRQV) form an RNA-binding region. Residues 1411–1416 (MSAIFQ) are oligomerization. An intramembrane segment occupies 1471 to 1486 (IIANIISIAGIIFVIY). Over 1487-2157 (KLFCTLQGPY…LLKHEWYEKF (671 aa)) the chain is Cytoplasmic. An O-(5'-phospho-RNA)-tyrosine modification is found at Tyr-1496. Residues 1515 to 1693 (GPEEEFGRSI…FSAMLLRSYF (179 aa)) enclose the Peptidase C3 domain. Active-site for protease 3C activity residues include His-1554, Glu-1585, and Cys-1661. The region spanning 1925-2038 (DCIMAFDYTN…SYKYTLDMEA (114 aa)) is the RdRp catalytic domain. Residues Asp-1931 and Asp-2024 each contribute to the Mg(2+) site.

It belongs to the picornaviruses polyprotein family. As to quaternary structure, interacts with capsid protein VP1 and capsid protein VP3 to form heterotrimeric protomers. In terms of assembly, interacts with capsid protein VP0, and capsid protein VP3 to form heterotrimeric protomers. Five protomers subsequently associate to form pentamers which serve as building blocks for the capsid. Interacts with capsid protein VP2, capsid protein VP3 and capsid protein VP4 following cleavage of capsid protein VP0. Interacts with capsid protein VP1 and capsid protein VP3 in the mature capsid. As to quaternary structure, interacts with capsid protein VP0 and capsid protein VP1 to form heterotrimeric protomers. Five protomers subsequently associate to form pentamers which serve as building blocks for the capsid. Interacts with capsid protein VP4 in the mature capsid. Interacts with protein 2C; this interaction may be important for virion morphogenesis. In terms of assembly, interacts with capsid protein VP1 and capsid protein VP3. Homodimer. As to quaternary structure, homohexamer; forms a hexameric ring structure with 6-fold symmetry characteristic of AAA+ ATPases. Interacts (via N-terminus) with host RTN3 (via reticulon domain); this interaction is important for viral replication. Interacts with capsid protein VP3; this interaction may be important for virion morphogenesis. In terms of assembly, interacts with protein 3CD. Homodimer. Interacts with host GBF1. Interacts (via GOLD domain) with host ACBD3 (via GOLD domain); this interaction allows the formation of a viral protein 3A/ACBD3 heterotetramer with a 2:2 stoichiometry, which will stimulate the recruitment of host PI4KB in order to synthesize PI4P at the viral RNA replication sites. As to quaternary structure, interacts with RNA-directed RNA polymerase. In terms of assembly, interacts with protein 3AB and with RNA-directed RNA polymerase. Interacts with Viral protein genome-linked and with protein 3CD. The cofactor is Mg(2+). Specific enzymatic cleavages in vivo by the viral proteases yield processing intermediates and the mature proteins. In terms of processing, myristoylation is required for the formation of pentamers during virus assembly. Further assembly of 12 pentamers and a molecule of genomic RNA generates the provirion. Post-translationally, during virion maturation, immature virions are rendered infectious following cleavage of VP0 into VP4 and VP2. This maturation seems to be an autocatalytic event triggered by the presence of RNA in the capsid and it is followed by a conformational change infectious virion. Myristoylation is required during RNA encapsidation and formation of the mature virus particle. In terms of processing, VPg is uridylylated by the polymerase into VPg-pUpU. This acts as a nucleotide-peptide primer for the genomic RNA replication.

The protein localises to the virion. The protein resides in the host cytoplasm. It localises to the host cytoplasmic vesicle membrane. Its subcellular location is the host nucleus. The enzyme catalyses a ribonucleoside 5'-triphosphate + H2O = a ribonucleoside 5'-diphosphate + phosphate + H(+). It catalyses the reaction Selective cleavage of Tyr-|-Gly bond in the picornavirus polyprotein.. It carries out the reaction RNA(n) + a ribonucleoside 5'-triphosphate = RNA(n+1) + diphosphate. The catalysed reaction is Selective cleavage of Gln-|-Gly bond in the poliovirus polyprotein. In other picornavirus reactions Glu may be substituted for Gln, and Ser or Thr for Gly.. Replication or transcription is subject to high level of random mutations by the nucleotide analog ribavirin. Forms an icosahedral capsid of pseudo T=3 symmetry with capsid proteins VP2 and VP3. The capsid is 300 Angstroms in diameter, composed of 60 copies of each capsid protein and enclosing the viral positive strand RNA genome. Capsid protein VP1 mainly forms the vertices of the capsid. Capsid protein VP1 interacts with host cell receptor to provide virion attachment to target host cells. This attachment induces virion internalization. Tyrosine kinases are probably involved in the entry process. After binding to its receptor, the capsid undergoes conformational changes. Capsid protein VP1 N-terminus (that contains an amphipathic alpha-helix) and capsid protein VP4 are externalized. Together, they shape a pore in the host membrane through which viral genome is translocated to host cell cytoplasm. Functionally, forms an icosahedral capsid of pseudo T=3 symmetry with capsid proteins VP2 and VP3. The capsid is 300 Angstroms in diameter, composed of 60 copies of each capsid protein and enclosing the viral positive strand RNA genome. Its function is as follows. Lies on the inner surface of the capsid shell. After binding to the host receptor, the capsid undergoes conformational changes. Capsid protein VP4 is released, Capsid protein VP1 N-terminus is externalized, and together, they shape a pore in the host membrane through which the viral genome is translocated into the host cell cytoplasm. In terms of biological role, component of immature procapsids, which is cleaved into capsid proteins VP4 and VP2 after maturation. Allows the capsid to remain inactive before the maturation step. Cysteine protease that cleaves viral polyprotein and specific host proteins. It is responsible for the autocatalytic cleavage between the P1 and P2 regions, which is the first cleavage occurring in the polyprotein. Also cleaves the host translation initiation factor EIF4G1, in order to shut down the capped cellular mRNA translation. Inhibits the host nucleus-cytoplasm protein and RNA trafficking by cleaving host members of the nuclear pores. Counteracts stress granule formation probably by antagonizing its assembly or promoting its dissassembly. Functionally, plays an essential role in the virus replication cycle by acting as a viroporin. Creates a pore in the host endoplasmic reticulum and as a consequence releases Ca2+ in the cytoplasm of infected cell. In turn, high levels of cytoplasmic calcium may trigger membrane trafficking and transport of viral ER-associated proteins to viroplasms, sites of viral genome replication. Its function is as follows. Induces and associates with structural rearrangements of intracellular membranes. Displays RNA-binding, nucleotide binding and NTPase activities. May play a role in virion morphogenesis and viral RNA encapsidation by interacting with the capsid protein VP3. In terms of biological role, localizes the viral replication complex to the surface of membranous vesicles. Together with protein 3CD binds the Cis-Active RNA Element (CRE) which is involved in RNA synthesis initiation. Acts as a cofactor to stimulate the activity of 3D polymerase, maybe through a nucleid acid chaperone activity. Localizes the viral replication complex to the surface of membranous vesicles. It inhibits host cell endoplasmic reticulum-to-Golgi apparatus transport and causes the disassembly of the Golgi complex, possibly through GBF1 interaction. This would result in depletion of MHC, trail receptors and IFN receptors at the host cell surface. Plays an essential role in viral RNA replication by recruiting ACBD3 and PI4KB at the viral replication sites, thereby allowing the formation of the rearranged membranous structures where viral replication takes place. Functionally, acts as a primer for viral RNA replication and remains covalently bound to viral genomic RNA. VPg is uridylylated prior to priming replication into VPg-pUpU. The oriI viral genomic sequence may act as a template for this. The VPg-pUpU is then used as primer on the genomic RNA poly(A) by the RNA-dependent RNA polymerase to replicate the viral genome. During genome replication, the VPg-RNA linkage is removed by the host TDP2, thereby accelerating replication. During the late stage of the replication cycle, host TDP2 is excluded from sites of viral RNA synthesis and encapsidation, allowing for the generation of progeny virions. Its function is as follows. Involved in the viral replication complex and viral polypeptide maturation. It exhibits protease activity with a specificity and catalytic efficiency that is different from protease 3C. Protein 3CD lacks polymerase activity. Protein 3CD binds to the 5'UTR of the viral genome. In terms of biological role, replicates the viral genomic RNA on the surface of intracellular membranes. May form linear arrays of subunits that propagate along a strong head-to-tail interaction called interface-I. Covalently attaches UMP to a tyrosine of VPg, which is used to prime RNA synthesis. The positive stranded RNA genome is first replicated at virus induced membranous vesicles, creating a dsRNA genomic replication form. This dsRNA is then used as template to synthesize positive stranded RNA genomes. ss(+)RNA genomes are either translated, replicated or encapsidated. Major viral protease that mediates proteolytic processing of the polyprotein. Cleaves host EIF5B, contributing to host translation shutoff. Also cleaves host PABPC1, contributing to host translation shutoff. Cleaves host NLRP1, triggers host N-glycine-mediated degradation of the autoinhibitory NLRP1 N-terminal fragment. This is Genome polyprotein from Homo sapiens (Human).